The sequence spans 271 residues: Phosphate import ATP-binding protein PstB 2 (271 aa).

Positions 1-20 (MLTKKPEINTILQTTPDPHS) are disordered. In terms of domain architecture, ABC transporter spans 25–266 (MATEDLHVYY…PQEKQTEDYI (242 aa)). An ATP-binding site is contributed by 57-64 (GPSGCGKS).

The protein belongs to the ABC transporter superfamily. Phosphate importer (TC 3.A.1.7) family. The complex is composed of two ATP-binding proteins (PstB), two transmembrane proteins (PstC and PstA) and a solute-binding protein (PstS).

Its subcellular location is the cell membrane. It carries out the reaction phosphate(out) + ATP + H2O = ADP + 2 phosphate(in) + H(+). Its function is as follows. Part of the ABC transporter complex PstSACB involved in phosphate import. Responsible for energy coupling to the transport system. The sequence is that of Phosphate import ATP-binding protein PstB 2 from Listeria innocua serovar 6a (strain ATCC BAA-680 / CLIP 11262).